We begin with the raw amino-acid sequence, 23 residues long: ADSLDWREKGVVNSIKDQAQXGS.

Basic and acidic residues predominate over residues 1–10 (ADSLDWREKG). Residues 1 to 23 (ADSLDWREKGVVNSIKDQAQXGS) are disordered.

This sequence belongs to the peptidase C1 family.

In Tritrichomonas foetus (Trichomonas foetus), this protein is Cysteine proteinase.